The chain runs to 121 residues: Large ribosomal subunit protein bL20 (121 aa).

Belongs to the bacterial ribosomal protein bL20 family.

Functionally, binds directly to 23S ribosomal RNA and is necessary for the in vitro assembly process of the 50S ribosomal subunit. It is not involved in the protein synthesizing functions of that subunit. The chain is Large ribosomal subunit protein bL20 from Ruegeria pomeroyi (strain ATCC 700808 / DSM 15171 / DSS-3) (Silicibacter pomeroyi).